Consider the following 130-residue polypeptide: Large ribosomal subunit protein bL17 (130 aa).

Belongs to the bacterial ribosomal protein bL17 family. In terms of assembly, part of the 50S ribosomal subunit. Contacts protein L32.

The sequence is that of Large ribosomal subunit protein bL17 from Pectobacterium atrosepticum (strain SCRI 1043 / ATCC BAA-672) (Erwinia carotovora subsp. atroseptica).